The following is a 348-amino-acid chain: Protein RecA (348 aa).

66-73 (GPESSGKT) is a binding site for ATP.

It belongs to the RecA family.

It is found in the cytoplasm. Can catalyze the hydrolysis of ATP in the presence of single-stranded DNA, the ATP-dependent uptake of single-stranded DNA by duplex DNA, and the ATP-dependent hybridization of homologous single-stranded DNAs. It interacts with LexA causing its activation and leading to its autocatalytic cleavage. The chain is Protein RecA from Legionella pneumophila (strain Paris).